Here is a 92-residue protein sequence, read N- to C-terminus: Phospholemman (92 aa).

Residues M1–A20 form the signal peptide. At E21–S35 the chain is on the extracellular side. Residues L36–L56 form a helical membrane-spanning segment. The Cytoplasmic portion of the chain corresponds to S57 to R92. A lipid anchor (S-palmitoyl cysteine) is attached at C60. C62 bears the S-glutathionyl cysteine; alternate mark. The S-palmitoyl cysteine; alternate moiety is linked to residue C62. Residues N65–R92 form a disordered region. T79 is modified (phosphothreonine). Phosphoserine is present on S82. Position 83 is a phosphoserine; by PKA and PKC (S83). Over residues S83 to R92 the composition is skewed to basic residues. S88 bears the Phosphoserine; by PKA mark. At T89 the chain carries Phosphothreonine; by PKC.

This sequence belongs to the FXYD family. As to quaternary structure, homotetramer. Monomer. Regulatory subunit of the sodium/potassium-transporting ATPase (NKA) which is composed of a catalytic alpha subunit, an auxiliary non-catalytic beta subunit and an additional regulatory subunit. The monomeric form associates with NKA while the oligomeric form does not. Interacts with the catalytic alpha-1 subunit ATP1A1. Also interacts with the catalytic alpha-2 and alpha-3 subunits ATP1A2 and ATP1A3. Very little interaction with ATP1A1, ATP1A2 or ATP1A3 when phosphorylated at Ser-83. Interacts with the non-catalytic beta-1 subunit ATP1B1. Oxidative stress decreases interaction with ATP1A1 but increases interaction with ATP1B1. Major plasma membrane substrate for cAMP-dependent protein kinase (PKA) and protein kinase C (PKC) in several different tissues. Phosphorylated in response to insulin and adrenergic stimulation. Phosphorylation at Ser-88 stimulates sodium/potassium-transporting ATPase activity while the unphosphorylated form inhibits sodium/potassium-transporting ATPase activity. Phosphorylation increases tetramerization, decreases binding to ATP1A1 and reduces inhibition of ATP1A1 activity. Phosphorylation at Ser-83 leads to greatly reduced interaction with ATP1A1, ATP1A2 and ATP1A3. May be phosphorylated by DMPK. Post-translationally, palmitoylation increases half-life and stability and is enhanced upon phosphorylation at Ser-88 by PKA. In terms of tissue distribution, highest expression in skeletal muscle and heart. Moderate levels in brain, placenta, lung, liver, pancreas, uterus, bladder, prostate, small intestine and colon with mucosal lining. Very low levels in kidney, colon and small intestine without mucosa, prostate without endothelial lining, spleen, and testis.

Its subcellular location is the cell membrane. It localises to the sarcolemma. The protein localises to the apical cell membrane. It is found in the membrane. The protein resides in the caveola. Its subcellular location is the T-tubule. Associates with and regulates the activity of the sodium/potassium-transporting ATPase (NKA) which transports Na(+) out of the cell and K(+) into the cell. Inhibits NKA activity in its unphosphorylated state and stimulates activity when phosphorylated. Reduces glutathionylation of the NKA beta-1 subunit ATP1B1, thus reversing glutathionylation-mediated inhibition of ATP1B1. Contributes to female sexual development by maintaining the excitability of neurons which secrete gonadotropin-releasing hormone. This Homo sapiens (Human) protein is Phospholemman.